The sequence spans 160 residues: S-ribosylhomocysteine lyase (160 aa).

Positions 57, 61, and 127 each coordinate Fe cation.

This sequence belongs to the LuxS family. Homodimer. Requires Fe cation as cofactor.

It carries out the reaction S-(5-deoxy-D-ribos-5-yl)-L-homocysteine = (S)-4,5-dihydroxypentane-2,3-dione + L-homocysteine. In terms of biological role, involved in the synthesis of autoinducer 2 (AI-2) which is secreted by bacteria and is used to communicate both the cell density and the metabolic potential of the environment. The regulation of gene expression in response to changes in cell density is called quorum sensing. Catalyzes the transformation of S-ribosylhomocysteine (RHC) to homocysteine (HC) and 4,5-dihydroxy-2,3-pentadione (DPD). The polypeptide is S-ribosylhomocysteine lyase (Streptococcus pyogenes serotype M4 (strain MGAS10750)).